Reading from the N-terminus, the 101-residue chain is Small ribosomal subunit protein bS18c (101 aa).

Belongs to the bacterial ribosomal protein bS18 family. In terms of assembly, part of the 30S ribosomal subunit.

Its subcellular location is the plastid. The protein resides in the chloroplast. In Nymphaea alba (White water-lily), this protein is Small ribosomal subunit protein bS18c.